Reading from the N-terminus, the 53-residue chain is Small, acid-soluble spore protein K (53 aa).

The interval 1-53 is disordered; it reads MRNKEHNFPNQNNNKFEGEPRAKSEYASKRADGTTNTHPQERMRASGERSDFF. Composition is skewed to basic and acidic residues over residues 16–32 and 39–53; these read FEGE…KRAD and PQER…SDFF.

Belongs to the SspK family.

The protein resides in the spore core. In Geobacillus thermodenitrificans (strain NG80-2), this protein is Small, acid-soluble spore protein K.